The sequence spans 330 residues: Glycerol-3-phosphate dehydrogenase [NAD(P)+] (330 aa).

NADPH is bound by residues S11, F12, R32, and K106. Sn-glycerol 3-phosphate contacts are provided by K106, G133, and S135. A137 is an NADPH binding site. The sn-glycerol 3-phosphate site is built by K188, D241, S251, R252, and N253. The Proton acceptor role is filled by K188. R252 contacts NADPH. NADPH-binding residues include V276 and E278.

Belongs to the NAD-dependent glycerol-3-phosphate dehydrogenase family.

The protein resides in the cytoplasm. The enzyme catalyses sn-glycerol 3-phosphate + NAD(+) = dihydroxyacetone phosphate + NADH + H(+). It carries out the reaction sn-glycerol 3-phosphate + NADP(+) = dihydroxyacetone phosphate + NADPH + H(+). Its pathway is membrane lipid metabolism; glycerophospholipid metabolism. Catalyzes the reduction of the glycolytic intermediate dihydroxyacetone phosphate (DHAP) to sn-glycerol 3-phosphate (G3P), the key precursor for phospholipid synthesis. The protein is Glycerol-3-phosphate dehydrogenase [NAD(P)+] of Clostridium botulinum (strain Alaska E43 / Type E3).